Consider the following 670-residue polypeptide: Septation protein 7 (670 aa).

Residues 33–357 (KGIKFTFMVV…ETYRTERLTK (325 aa)) enclose the Septin-type G domain. Residues 43–50 (GESGTGKT) form a G1 motif region. Residues 43–50 (GESGTGKT), glycine 137, 217–225 (KADSFTLNE), and arginine 306 each bind GTP. Positions 134–137 (DTPG) are G3 motif. Residues 216-219 (GKAD) are G4 motif. 2 disordered regions span residues 383 to 513 (LNDS…QRNQ) and 574 to 670 (LNRQ…VSNH). Residues 395–404 (NNNNNNNNNN) show a composition bias toward low complexity. The span at 405 to 421 (ASTIPSMSNLAQLTTST) shows a compositional bias: polar residues. Low complexity-rich tracts occupy residues 433 to 446 (SITS…KSTS) and 463 to 473 (SSFTSSTSTVS). Residues 472–606 (VSLEGGEKEG…SVQSGGVDDG (135 aa)) are a coiled coil. Basic and acidic residues predominate over residues 476 to 487 (GGEKEGGHHDRG). The span at 489-500 (NSTSTNNNNNNN) shows a compositional bias: low complexity. Over residues 631–645 (QSHEYDNSEYHHDDS) the composition is skewed to basic and acidic residues.

Belongs to the TRAFAC class TrmE-Era-EngA-EngB-Septin-like GTPase superfamily. Septin GTPase family. Component of the septin complex which consists of CDC3, CDC10, CDC11, CDC12 and probably SEP7. The purified septin complex appeared to have a stoichiometry of 2 CDC3, 1 to 2 CDC10, 1 CDC11, 2 CDC12, and 1 or none SEP7 subunit. Induction of hyphal growth brings about important modifications in septin ring dynamics, because the rings were found in a different state from those of yeast cells. This hyphal-specific state contains a core of stable septins (SEP7, CDC3, and CDC12), and it shows a high CDC10 turnover between the ring and the cytoplasm. Interacts with GIN4. Post-translationally, phosphorylated by GIN4 which stabilizes the GIN4-SEP7 interaction.

It localises to the bud neck. Septins are GTPases involved in cytokinesis that assemble early in the cell cycle as a patch at the incipient bud site and form a ring before bud emergence, which transforms into an hour-glass shaped collar of cortical filaments that spans both sides of the mother-bud neck. This collar persists until just before cytokinesis, when it splits into two rings that occupy opposite sides of the neck. The septins at the bud neck serve as a structural scaffold that recruits different components involved in diverse processes at specific stages during the cell cycle. Many proteins bind asymmetrically to the septin collar. The septin assembly is regulated by protein kinase GIN4. Septins are also involved in cell morphogenesis, chlamydospores morphogenesis, bud site selection, chitin deposition, cell cycle regulation, cell compartmentalization and spore wall formation. SEP7 is required to convert hyphal septin rings into the hyphal-specific state and is necessary for CDC10 turnover during hyphal growth. This chain is Septation protein 7 (SEP7), found in Candida albicans (strain SC5314 / ATCC MYA-2876) (Yeast).